Consider the following 663-residue polypeptide: Polyunsaturated fatty acid lipoxygenase ALOX12 (663 aa).

The PLAT domain occupies 2 to 114 (GRYRVRVVTG…ILSLPEGTAR (113 aa)). One can recognise a Lipoxygenase domain in the interval 115-663 (LAGDNALDVF…PSRIENSITI (549 aa)). Ser246 bears the Phosphoserine mark. Positions 360, 365, 540, 544, and 663 each coordinate Fe cation.

It belongs to the lipoxygenase family. Fe cation serves as cofactor. In terms of tissue distribution, found primarily in platelets and in microsomal and cytosolic fractions of the epidermis (at protein level).

It is found in the cytoplasm. The protein resides in the cytosol. The protein localises to the membrane. The enzyme catalyses (5Z,8Z,11Z,14Z)-eicosatetraenoate + O2 = (12S)-hydroperoxy-(5Z,8Z,10E,14Z)-eicosatetraenoate. It catalyses the reaction (9Z,12Z)-octadecadienoate + O2 = (13S)-hydroperoxy-(9Z,11E)-octadecadienoate. It carries out the reaction 2 leukotriene A4 + O2 + 2 H2O = 2 lipoxin A4. The catalysed reaction is 2 leukotriene A4 + O2 + 2 H2O = 2 lipoxin B4. The enzyme catalyses (5Z,8Z,11Z)-eicosatrienoate + O2 = (12S)-hydroperoxy-(5Z,8Z,10E)-eicosatrienoate. It catalyses the reaction (8Z,11Z,14Z)-eicosatrienoate + O2 = (12S)-hydroperoxy-(8Z,10E,14Z)-eicosatrienoate. It carries out the reaction (4Z,7Z,10Z,13Z,16Z,19Z)-docosahexaenoate + O2 = (14S)-hydroperoxy-(4Z,7Z,10Z,12E,16Z,19Z)-docosahexaenoate. The catalysed reaction is (7S)-hydroperoxy-(4Z,8E,10Z,13Z,16Z,19Z)-docosahexaenoate + O2 = (7S,14S)-dihydroperoxy-(4Z,8E,10Z,12E,16Z,19Z)-docosahexaenoate. The enzyme catalyses (7S)-hydroperoxy-(4Z,8E,10Z,13Z,16Z,19Z)-docosahexaenoate + O2 = (7S,17S)-dihydroperoxy-(4Z,8E,10Z,13Z,15E,19Z)-docosahexaenoate. It catalyses the reaction (14R,15S)-epoxy-(5Z,8Z,11Z)-eicosatrienoate + O2 = (12S)-hydroperoxy-(14R,15S)-epoxy-(5Z,8Z,10E)-eicosatrienoate. It carries out the reaction (14S,15R)-epoxy-(5Z,8Z,11Z)-eicosatrienoate + O2 = (12S)-hydroperoxy-(14S,15R)-epoxy-(5Z,8Z,10E)-eicosatrienoate. The catalysed reaction is (5Z,8Z,11Z,14Z)-eicosatetraenoate + O2 = (15S)-hydroperoxy-(5Z,8Z,11Z,13E)-eicosatetraenoate. The enzyme catalyses (14S)-hydroperoxy-(4Z,7Z,10Z,12E,16Z,19Z)-docosahexaenoate = (13S,14S)-epoxy-(4Z,7Z,9E,11E,16Z,19Z)-docosahexaenoate + H2O. It catalyses the reaction N-(5Z,8Z,11Z,14Z)-eicosatetraenoyl-L-alanine + O2 = N-(15S)-hydroperoxy-(5Z,8Z,11Z,13E)-eicosatetraenoyl-alanine. It carries out the reaction N-(5Z,8Z,11Z,14Z)-eicosatetraenoyl-L-alanine + O2 = N-(12S)-hydroperoxy-(5Z,8Z,10E,14Z)-eicosatetraenoyl-alanine. The catalysed reaction is N-(5Z,8Z,11Z,14Z)-eicosatetraenoyl-gamma-aminobutanoate + O2 = N-(15S)-hydroperoxy-(5Z,8Z,11Z,13E)-eicosatetraenoyl-gamma-aminobutanoate. The enzyme catalyses N-(5Z,8Z,11Z,14Z)-eicosatetraenoyl-gamma-aminobutanoate + O2 = N-(12S)-hydroperoxy-(5Z,8Z,10E,14Z)-eicosatetraenoyl-gamma-aminobutanoate. It catalyses the reaction N-(5Z,8Z,11Z,14Z)-eicosatetraenoyl-glycine + O2 = N-(15S)-hydroperoxy-(5Z,8Z,11Z,13E)-eicosatetraenoyl-glycine. It carries out the reaction N-(5Z,8Z,11Z,14Z)-eicosatetraenoyl-glycine + O2 = N-(12S)-hydroperoxy-(5Z,8Z,10E,14Z)-eicosatetraenoyl-glycine. The catalysed reaction is N-(5Z,8Z,11Z,14Z)-eicosatetraenoyl-taurine + O2 = N-(12S)-hydroperoxy-(5Z,8Z,10E,14Z)-eicosatetraenoyl-taurine. The enzyme catalyses N-(5Z,8Z,11Z,14Z)-eicosatetraenoyl-taurine + O2 = N-(15S)-hydroperoxy-(5Z,8Z,11Z,13E)-eicosatetraenoyl-taurine. It catalyses the reaction (5Z,8Z,11Z,14Z,17Z)-eicosapentaenoate + O2 = (12S)-hydroperoxy-(5Z,8Z,10E,14Z,17Z)-eicosapentaenoate. It functions in the pathway lipid metabolism; hydroperoxy eicosatetraenoic acid biosynthesis. Activated by EGF. Arachidonic acid conversion is inhibited by (13S,14S)-epoxy-(4Z,7Z,9E,11E,16Z,19Z)-docosahexaenoate (13S,14S-epoxy-DHA). Arachidonate 12-lipoxygenase activity is decreased when PH decreases from 7.4 to 6. Functionally, catalyzes the regio and stereo-specific incorporation of molecular oxygen into free and esterified polyunsaturated fatty acids generating lipid hydroperoxides that can be further reduced to the corresponding hydroxy species. Mainly converts arachidonate ((5Z,8Z,11Z,14Z)-eicosatetraenoate) to the specific bioactive lipid (12S)-hydroperoxyeicosatetraenoate/(12S)-HPETE. Through the production of bioactive lipids like (12S)-HPETE it regulates different biological processes including platelet activation. It can also catalyze the epoxidation of double bonds of polyunsaturated fatty acids such as (14S)-hydroperoxy-docosahexaenoate/(14S)-HPDHA resulting in the formation of (13S,14S)-epoxy-DHA. Furthermore, it may participate in the sequential oxidations of DHA ((4Z,7Z,10Z,13Z,16Z,19Z)-docosahexaenoate) to generate specialized pro-resolving mediators (SPMs) like resolvin D5 ((7S,17S)-diHPDHA) and (7S,14S)-diHPDHA, that actively down-regulate the immune response and have anti-aggregation properties with platelets. An additional function involves a multistep process by which it transforms leukotriene A4/LTA4 into the bioactive lipids lipoxin A4/LXA4 and lipoxin B4/LXB4, both are vasoactive and LXA4 may regulate neutrophil function via occupancy of specific recognition sites. Can also peroxidize linoleate ((9Z,12Z)-octadecadienoate) to (13S)-hydroperoxyoctadecadienoate/ (13S-HPODE). Due to its role in regulating both the expression of the vascular endothelial growth factor (VEGF, an angiogenic factor involved in the survival and metastasis of solid tumors) and the expression of integrin beta-1 (known to affect tumor cell migration and proliferation), it can be regarded as protumorigenic. Important for cell survival, as it may play a role not only in proliferation but also in the prevention of apoptosis in vascular smooth muscle cells. The chain is Polyunsaturated fatty acid lipoxygenase ALOX12 (Alox12) from Mus musculus (Mouse).